A 258-amino-acid polypeptide reads, in one-letter code: Ubiquinone/menaquinone biosynthesis C-methyltransferase UbiE (258 aa).

Residues Thr81, Asp102, and 130–131 (NA) contribute to the S-adenosyl-L-methionine site.

This sequence belongs to the class I-like SAM-binding methyltransferase superfamily. MenG/UbiE family.

It carries out the reaction a 2-demethylmenaquinol + S-adenosyl-L-methionine = a menaquinol + S-adenosyl-L-homocysteine + H(+). It catalyses the reaction a 2-methoxy-6-(all-trans-polyprenyl)benzene-1,4-diol + S-adenosyl-L-methionine = a 5-methoxy-2-methyl-3-(all-trans-polyprenyl)benzene-1,4-diol + S-adenosyl-L-homocysteine + H(+). It functions in the pathway quinol/quinone metabolism; menaquinone biosynthesis; menaquinol from 1,4-dihydroxy-2-naphthoate: step 2/2. Its pathway is cofactor biosynthesis; ubiquinone biosynthesis. In terms of biological role, methyltransferase required for the conversion of demethylmenaquinol (DMKH2) to menaquinol (MKH2) and the conversion of 2-polyprenyl-6-methoxy-1,4-benzoquinol (DDMQH2) to 2-polyprenyl-3-methyl-6-methoxy-1,4-benzoquinol (DMQH2). In Allorhizobium ampelinum (strain ATCC BAA-846 / DSM 112012 / S4) (Agrobacterium vitis (strain S4)), this protein is Ubiquinone/menaquinone biosynthesis C-methyltransferase UbiE.